The sequence spans 355 residues: Peptide chain release factor 1 (355 aa).

Q231 is subject to N5-methylglutamine. Positions L283–I303 are disordered.

Belongs to the prokaryotic/mitochondrial release factor family. Post-translationally, methylated by PrmC. Methylation increases the termination efficiency of RF1.

The protein resides in the cytoplasm. Peptide chain release factor 1 directs the termination of translation in response to the peptide chain termination codons UAG and UAA. The protein is Peptide chain release factor 1 of Campylobacter lari (strain RM2100 / D67 / ATCC BAA-1060).